The primary structure comprises 308 residues: GTP cyclohydrolase MptA (308 aa).

A disordered region spans residues 282 to 308 (NDESIHQHNAHAEREVTLGQLRDELDA).

It belongs to the GTP cyclohydrolase IV family. In terms of assembly, homodimer. It depends on Fe(2+) as a cofactor.

The enzyme catalyses GTP + H2O = 7,8-dihydroneopterin 2',3'-cyclic phosphate + formate + diphosphate + H(+). It participates in cofactor biosynthesis; 5,6,7,8-tetrahydromethanopterin biosynthesis. In terms of biological role, converts GTP to 7,8-dihydro-D-neopterin 2',3'-cyclic phosphate, the first intermediate in the biosynthesis of coenzyme methanopterin. Involved in archaeosine (G(+)) and folate biosynthesis. The polypeptide is GTP cyclohydrolase MptA (Haloferax volcanii (strain ATCC 29605 / DSM 3757 / JCM 8879 / NBRC 14742 / NCIMB 2012 / VKM B-1768 / DS2) (Halobacterium volcanii)).